Consider the following 665-residue polypeptide: Succinate dehydrogenase [ubiquinone] flavoprotein subunit A, mitochondrial (665 aa).

Residues 1–45 (MALLKVAPSRLLSRALQLASRVQNCTPTVTTARRNFHFTVYGRKD) constitute a mitochondrion transit peptide. Ala72, Ala75, Thr94, Lys95, and Ser101 together coordinate FAD. His102 is modified (tele-8alpha-FAD histidine). Residues Thr103, Gly108, Ala224, and Asp278 each contribute to the FAD site. Residues His299, Arg343, and His410 each contribute to the oxaloacetate site. The Proton acceptor role is filled by Arg343. Glu443 is a binding site for FAD. Oxaloacetate is bound by residues Arg454 and Ala457. 2 residues coordinate FAD: Ser459 and Leu460.

This sequence belongs to the FAD-dependent oxidoreductase 2 family. FRD/SDH subfamily. As to quaternary structure, component of complex II composed of four subunits: a flavoprotein (FP), an iron-sulfur protein (IP), and a cytochrome b composed of a large and a small subunit. Requires FAD as cofactor.

The protein localises to the mitochondrion inner membrane. The enzyme catalyses a ubiquinone + succinate = a ubiquinol + fumarate. It carries out the reaction (R)-malate + a quinone = enol-oxaloacetate + a quinol. The catalysed reaction is (S)-malate + a quinone = enol-oxaloacetate + a quinol. It functions in the pathway carbohydrate metabolism; tricarboxylic acid cycle; fumarate from succinate (eukaryal route): step 1/1. Enol-oxaloacetate inhibits the succinate dehydrogenase activity. Functionally, flavoprotein (FP) subunit of succinate dehydrogenase (SDH) that is involved in complex II of the mitochondrial electron transport chain and is responsible for transferring electrons from succinate to ubiquinone (coenzyme Q). SDH also oxidizes malate to the non-canonical enol form of oxaloacetate, enol-oxaloacetate. Enol-oxaloacetate, which is a potent inhibitor of the succinate dehydrogenase activity, is further isomerized into keto-oxaloacetate. This Xenopus laevis (African clawed frog) protein is Succinate dehydrogenase [ubiquinone] flavoprotein subunit A, mitochondrial (sdha-a).